Reading from the N-terminus, the 64-residue chain is Sperm protamine P1 (64 aa).

Residues M1–Y64 form a disordered region.

It belongs to the protamine P1 family. In terms of tissue distribution, testis.

The protein localises to the nucleus. The protein resides in the chromosome. Protamines substitute for histones in the chromatin of sperm during the haploid phase of spermatogenesis. They compact sperm DNA into a highly condensed, stable and inactive complex. This Hypsiprymnodon moschatus (Musky rat kangaroo) protein is Sperm protamine P1 (PRM1).